Consider the following 435-residue polypeptide: Rho GTPase-activating protein 4 (435 aa).

The interval 1 to 59 (MAKVLKSSQSCHFPSPSSSSSTSCGGGNDGSNRDPHSPFNISRREEEEEEEERSEKERE) is disordered. Low complexity predominate over residues 7–23 (SSQSCHFPSPSSSSSTS). Residues 93–106 (IGVPTDVRHVAHVT) enclose the CRIB domain. Residues 138 to 319 (VSTESMQLSY…LIVKTLKDRK (182 aa)) enclose the Rho-GAP domain. The interval 321-343 (SRDKLVPASNPSPRDHNGDQSSS) is disordered.

Functionally, acts as a GTPase activator for the Rac-type GTPase by converting it to an inactive GDP-bound state. Acts as a negative feedback regulator in tolerance to oxygen deprivation which requires ARAC4/ROP2. The protein is Rho GTPase-activating protein 4 (ROPGAP4) of Arabidopsis thaliana (Mouse-ear cress).